The following is a 245-amino-acid chain: Phosphoribosylaminoimidazole-succinocarboxamide synthase (245 aa).

Belongs to the SAICAR synthetase family.

It catalyses the reaction 5-amino-1-(5-phospho-D-ribosyl)imidazole-4-carboxylate + L-aspartate + ATP = (2S)-2-[5-amino-1-(5-phospho-beta-D-ribosyl)imidazole-4-carboxamido]succinate + ADP + phosphate + 2 H(+). Its pathway is purine metabolism; IMP biosynthesis via de novo pathway; 5-amino-1-(5-phospho-D-ribosyl)imidazole-4-carboxamide from 5-amino-1-(5-phospho-D-ribosyl)imidazole-4-carboxylate: step 1/2. This Trichormus variabilis (strain ATCC 29413 / PCC 7937) (Anabaena variabilis) protein is Phosphoribosylaminoimidazole-succinocarboxamide synthase.